The following is a 197-amino-acid chain: MECGVETLLPLVVGYVLGSVPFGLILTRLTGAGDLRAIGSGNIGATNVLRTGKKGLAAATLLLDLGKGLAAVLIVRHVWPGAEALAALAAVLGHCFPVWLRFKGGKGVATLMGVSLALAWPIGLVYAVTWLGVLFLSRISSLGGMSAAVVAPVAAAVLGYAPYVPVLALLALLVLYLHRENIARLRAGTEPKVGSRK.

Transmembrane regions (helical) follow at residues 7 to 27, 55 to 75, 78 to 98, 116 to 136, and 157 to 177; these read TLLP…LILT, GLAA…VLIV, VWPG…CFPV, LALA…VLFL, and VLGY…VLYL.

Belongs to the PlsY family. In terms of assembly, probably interacts with PlsX.

Its subcellular location is the cell inner membrane. The enzyme catalyses an acyl phosphate + sn-glycerol 3-phosphate = a 1-acyl-sn-glycero-3-phosphate + phosphate. It functions in the pathway lipid metabolism; phospholipid metabolism. Its function is as follows. Catalyzes the transfer of an acyl group from acyl-phosphate (acyl-PO(4)) to glycerol-3-phosphate (G3P) to form lysophosphatidic acid (LPA). This enzyme utilizes acyl-phosphate as fatty acyl donor, but not acyl-CoA or acyl-ACP. The protein is Glycerol-3-phosphate acyltransferase of Novosphingobium aromaticivorans (strain ATCC 700278 / DSM 12444 / CCUG 56034 / CIP 105152 / NBRC 16084 / F199).